The chain runs to 240 residues: Anti-H(O) lectin (240 aa).

Residue asparagine 4 is glycosylated (N-linked (GlcNAc...) asparagine). 2 residues coordinate Mn(2+): glutamate 124 and aspartate 126. Ca(2+)-binding residues include aspartate 126, tyrosine 128, asparagine 130, and aspartate 133. Mn(2+) is bound by residues aspartate 133 and histidine 141.

Belongs to the leguminous lectin family.

In terms of biological role, L-fucose specific lectin. This Lotus tetragonolobus (Winged pea) protein is Anti-H(O) lectin.